Consider the following 891-residue polypeptide: Shieldin complex subunit 2 (891 aa).

Residues 1-61 are sufficient for interaction with SHLD3 and MAD2L2; it reads MSQGSQVHIF…AGDQEFKNLE (61 aa). Residues 1-542 are interaction with ASTE1; the sequence is MSQGSQVHIF…TYVSTKHSYL (542 aa). Disordered regions lie at residues 184–222, 260–294, and 333–357; these read MSTG…KASD, NMEA…NEQS, and NEEN…WSCK. Over residues 192 to 222 the composition is skewed to basic and acidic residues; the sequence is PTGHRERQSQESFSDTRCEPQSEGAVRKASD. Polar residues-rich tracts occupy residues 260 to 271 and 342 to 354; these read NMEAEPTGSQGV and LCSS…NRSW. A mediates interaction with SHLD1 region spans residues 695–866; the sequence is KYSGVVLIKA…QQDFSLLDFC (172 aa).

The protein belongs to the SHLD2 family. In terms of assembly, component of the shieldin complex, consisting of SHLD1, SHLD2, SHLD3 and MAD2L2/REV7. Within the complex, SHLD2 forms a scaffold which interacts with a SHLD3-MAD2L2 subcomplex via its N-terminus, and with SHLD1 via its C-terminus. Interacts with TP53BP1. Interacts with RIF1. Interacts with ASTE1.

The protein resides in the chromosome. Its function is as follows. Component of the shieldin complex, which plays an important role in repair of DNA double-stranded breaks (DSBs). During G1 and S phase of the cell cycle, the complex functions downstream of TP53BP1 to promote non-homologous end joining (NHEJ) and suppress DNA end resection. Mediates various NHEJ-dependent processes including immunoglobulin class-switch recombination, and fusion of unprotected telomeres. The polypeptide is Shieldin complex subunit 2 (Mus musculus (Mouse)).